The following is a 313-amino-acid chain: Probable pyridoxal 5'-phosphate synthase subunit PDX1.2 (313 aa).

Asp-42 serves as a coordination point for D-ribose 5-phosphate. Lys-99 functions as the Schiff-base intermediate with D-ribose 5-phosphate in the catalytic mechanism. A D-ribose 5-phosphate-binding site is contributed by Gly-171. Arg-183 contributes to the D-glyceraldehyde 3-phosphate binding site. D-ribose 5-phosphate contacts are provided by residues Gly-232 and 253–254 (GS).

This sequence belongs to the PdxS/SNZ family.

It catalyses the reaction aldehydo-D-ribose 5-phosphate + D-glyceraldehyde 3-phosphate + L-glutamine = pyridoxal 5'-phosphate + L-glutamate + phosphate + 3 H2O + H(+). Its pathway is cofactor biosynthesis; pyridoxal 5'-phosphate biosynthesis. Its function is as follows. Catalyzes the formation of pyridoxal 5'-phosphate from ribose 5-phosphate (RBP), glyceraldehyde 3-phosphate (G3P) and ammonia. The ammonia is provided by PDX2. Can also use ribulose 5-phosphate and dihydroxyacetone phosphate as substrates, resulting from enzyme-catalyzed isomerization of RBP and G3P, respectively. Also plays an indirect role in resistance to singlet oxygen-generating photosensitizers. This chain is Probable pyridoxal 5'-phosphate synthase subunit PDX1.2 (PDX12), found in Oryza sativa subsp. japonica (Rice).